A 390-amino-acid chain; its full sequence is MATLNPRDVVIVDGVRSAMGKSKNGMFRNVRADSLSAELVRALVARNQFDVNEVEDLIWGCVNQTLEQGMNIGRNIGLLAGLPKTVAGQTVNRLCGSSMQAIHTAAAQIATNQGDIFIIGGVEHMGHVGMMHGIDLNPEASKHYAKASNMMGLTAEMLGRMNGITREEQDAFGVESHRRAWAATQEGRFKNEIIGVEGHDANGFKILCDIDEVIRPDANLEAFKALKPVFDPKGGSVTAATSSALSDGASAMLLMSAERAQALGLKPRAVIRSMAVAGCDAAIMGYGPVPATQKALKRAGLSIADIQTVELNEAFAAQGLSVLKGLGLYDKQDIVNLNGGAIALGHPLGCSGARITTTLLNVMEQQDTQIGLATMCIGLGQGIATVIERV.

Catalysis depends on cysteine 95, which acts as the Acyl-thioester intermediate. Catalysis depends on proton acceptor residues histidine 346 and cysteine 376.

This sequence belongs to the thiolase-like superfamily. Thiolase family. In terms of assembly, heterotetramer of two alpha chains (FadB) and two beta chains (FadA).

Its subcellular location is the cytoplasm. The catalysed reaction is an acyl-CoA + acetyl-CoA = a 3-oxoacyl-CoA + CoA. The protein operates within lipid metabolism; fatty acid beta-oxidation. Functionally, catalyzes the final step of fatty acid oxidation in which acetyl-CoA is released and the CoA ester of a fatty acid two carbons shorter is formed. The polypeptide is 3-ketoacyl-CoA thiolase (Acinetobacter baumannii (strain AB307-0294)).